A 558-amino-acid polypeptide reads, in one-letter code: Putative ABC transporter ATP-binding protein SAG1633 (558 aa).

ABC transporter domains are found at residues I5 to E246 and L295 to K527. Residues G39 to S46 and G328 to S335 contribute to the ATP site.

This sequence belongs to the ABC transporter superfamily.

The protein localises to the cell membrane. Its function is as follows. Probably part of an ABC transporter complex. Responsible for energy coupling to the transport system. The polypeptide is Putative ABC transporter ATP-binding protein SAG1633 (Streptococcus agalactiae serotype V (strain ATCC BAA-611 / 2603 V/R)).